The primary structure comprises 222 residues: Thiamine-phosphate synthase (222 aa).

4-amino-2-methyl-5-(diphosphooxymethyl)pyrimidine contacts are provided by residues 44 to 48 (QVRMK) and N75. Mg(2+)-binding residues include D76 and D95. T114 serves as a coordination point for 4-amino-2-methyl-5-(diphosphooxymethyl)pyrimidine. 140 to 142 (SRS) contributes to the 2-[(2R,5Z)-2-carboxy-4-methylthiazol-5(2H)-ylidene]ethyl phosphate binding site. K143 lines the 4-amino-2-methyl-5-(diphosphooxymethyl)pyrimidine pocket. G171 provides a ligand contact to 2-[(2R,5Z)-2-carboxy-4-methylthiazol-5(2H)-ylidene]ethyl phosphate.

The protein belongs to the thiamine-phosphate synthase family. Mg(2+) serves as cofactor.

It carries out the reaction 2-[(2R,5Z)-2-carboxy-4-methylthiazol-5(2H)-ylidene]ethyl phosphate + 4-amino-2-methyl-5-(diphosphooxymethyl)pyrimidine + 2 H(+) = thiamine phosphate + CO2 + diphosphate. The catalysed reaction is 2-(2-carboxy-4-methylthiazol-5-yl)ethyl phosphate + 4-amino-2-methyl-5-(diphosphooxymethyl)pyrimidine + 2 H(+) = thiamine phosphate + CO2 + diphosphate. It catalyses the reaction 4-methyl-5-(2-phosphooxyethyl)-thiazole + 4-amino-2-methyl-5-(diphosphooxymethyl)pyrimidine + H(+) = thiamine phosphate + diphosphate. Its pathway is cofactor biosynthesis; thiamine diphosphate biosynthesis; thiamine phosphate from 4-amino-2-methyl-5-diphosphomethylpyrimidine and 4-methyl-5-(2-phosphoethyl)-thiazole: step 1/1. Its function is as follows. Condenses 4-methyl-5-(beta-hydroxyethyl)thiazole monophosphate (THZ-P) and 2-methyl-4-amino-5-hydroxymethyl pyrimidine pyrophosphate (HMP-PP) to form thiamine monophosphate (TMP). The protein is Thiamine-phosphate synthase of Anaeromyxobacter dehalogenans (strain 2CP-C).